The sequence spans 267 residues: 4-hydroxy-tetrahydrodipicolinate reductase (267 aa).

10 to 15 (GCLGKQ) contributes to the NAD(+) binding site. R37 lines the NADP(+) pocket. NAD(+) is bound by residues 99–101 (GTT) and 122–125 (TTNV). Residue H154 is the Proton donor/acceptor of the active site. H155 is a (S)-2,3,4,5-tetrahydrodipicolinate binding site. The Proton donor role is filled by K158. 164 to 165 (GT) is a (S)-2,3,4,5-tetrahydrodipicolinate binding site.

It belongs to the DapB family.

Its subcellular location is the cytoplasm. The catalysed reaction is (S)-2,3,4,5-tetrahydrodipicolinate + NAD(+) + H2O = (2S,4S)-4-hydroxy-2,3,4,5-tetrahydrodipicolinate + NADH + H(+). It catalyses the reaction (S)-2,3,4,5-tetrahydrodipicolinate + NADP(+) + H2O = (2S,4S)-4-hydroxy-2,3,4,5-tetrahydrodipicolinate + NADPH + H(+). Its pathway is amino-acid biosynthesis; L-lysine biosynthesis via DAP pathway; (S)-tetrahydrodipicolinate from L-aspartate: step 4/4. Catalyzes the conversion of 4-hydroxy-tetrahydrodipicolinate (HTPA) to tetrahydrodipicolinate. In Ehrlichia canis (strain Jake), this protein is 4-hydroxy-tetrahydrodipicolinate reductase.